We begin with the raw amino-acid sequence, 316 residues long: Nucleoside diphosphate-linked moiety X motif 6 (316 aa).

Residues Ser141–Tyr273 form the Nudix hydrolase domain. A Nudix box motif is present at residues Gly176 to Gly197.

The protein belongs to the Nudix hydrolase family. Monomer and homodimer. As to expression, detected in liver, kidney and esophagus (at protein level). Ubiquitous.

Its subcellular location is the cytoplasm. The protein resides in the nucleus. It localises to the mitochondrion. In terms of biological role, may contribute to the regulation of cell proliferation. This chain is Nucleoside diphosphate-linked moiety X motif 6 (NUDT6), found in Homo sapiens (Human).